The sequence spans 153 residues: Small ribosomal subunit protein uS13 (153 aa).

A disordered region spans residues 134-153; the sequence is GQRTKSNGRRGRSMGVSRKK.

This sequence belongs to the universal ribosomal protein uS13 family.

Its subcellular location is the cytoplasm. Its function is as follows. Located at the top of the head of the 40S subunit, it contacts several helices of the 18S rRNA. The chain is Small ribosomal subunit protein uS13 (RPS18) from Encephalitozoon cuniculi (strain GB-M1) (Microsporidian parasite).